A 1069-amino-acid polypeptide reads, in one-letter code: Leucine--tRNA ligase (1069 aa).

A disordered region spans residues 19-53 (TAEHGTGAANATASPSGAVPPSGATATAGTGDEPG). The short motif at 107–118 (PYPSGTGLHVGH) is the 'HIGH' region element. Residues 823 to 836 (GRFTHHGAPVDRRS) show a composition bias toward basic and acidic residues. The disordered stretch occupies residues 823–846 (GRFTHHGAPVDRRSGKMGKSLKNS). A 'KMSKS' region motif is present at residues 838-842 (KMGKS). Lys841 is an ATP binding site.

The protein belongs to the class-I aminoacyl-tRNA synthetase family.

The protein localises to the cytoplasm. The catalysed reaction is tRNA(Leu) + L-leucine + ATP = L-leucyl-tRNA(Leu) + AMP + diphosphate. The sequence is that of Leucine--tRNA ligase from Frankia alni (strain DSM 45986 / CECT 9034 / ACN14a).